The following is a 152-amino-acid chain: Large ribosomal subunit protein uL22 (152 aa).

Belongs to the universal ribosomal protein uL22 family. As to quaternary structure, part of the 50S ribosomal subunit.

This protein binds specifically to 23S rRNA. It makes multiple contacts with different domains of the 23S rRNA in the assembled 50S subunit and ribosome. Its function is as follows. The globular domain of the protein is located near the polypeptide exit tunnel on the outside of the subunit, while an extended beta-hairpin is found that lines the wall of the exit tunnel in the center of the 70S ribosome. This is Large ribosomal subunit protein uL22 from Methanothrix thermoacetophila (strain DSM 6194 / JCM 14653 / NBRC 101360 / PT) (Methanosaeta thermophila).